The chain runs to 292 residues: ATP synthase gamma chain (292 aa).

It belongs to the ATPase gamma chain family. As to quaternary structure, F-type ATPases have 2 components, CF(1) - the catalytic core - and CF(0) - the membrane proton channel. CF(1) has five subunits: alpha(3), beta(3), gamma(1), delta(1), epsilon(1). CF(0) has three main subunits: a, b and c.

It localises to the cell inner membrane. Its function is as follows. Produces ATP from ADP in the presence of a proton gradient across the membrane. The gamma chain is believed to be important in regulating ATPase activity and the flow of protons through the CF(0) complex. This Hyphomonas neptunium (strain ATCC 15444) protein is ATP synthase gamma chain.